An 80-amino-acid chain; its full sequence is Exodeoxyribonuclease 7 small subunit (80 aa).

This sequence belongs to the XseB family. In terms of assembly, heterooligomer composed of large and small subunits.

The protein localises to the cytoplasm. The catalysed reaction is Exonucleolytic cleavage in either 5'- to 3'- or 3'- to 5'-direction to yield nucleoside 5'-phosphates.. Functionally, bidirectionally degrades single-stranded DNA into large acid-insoluble oligonucleotides, which are then degraded further into small acid-soluble oligonucleotides. The protein is Exodeoxyribonuclease 7 small subunit of Pseudomonas fluorescens (strain SBW25).